The primary structure comprises 710 residues: Choline transporter-like protein 2 (710 aa).

At 1-34 (MEDDGKSPPDSAYGEPKKYDPNFKGPIQNRGCTD) the chain is on the cytoplasmic side. A helical membrane pass occupies residues 35–55 (ILCCILIVLGIIAYVAVGIVA). Residues 56 to 236 (WTYGDPRKVI…KIFEDYTVSW (181 aa)) lie on the Extracellular side of the membrane. 3 N-linked (GlcNAc...) asparagine glycosylation sites follow: Asn-147, Asn-190, and Asn-204. A helical membrane pass occupies residues 237–257 (YWIIIGLIIAMVISLIFVVLL). The Cytoplasmic portion of the chain corresponds to 258–260 (RFL). Residues 261 to 281 (AGIMVWVMIVLVIAVMGYGIF) form a helical membrane-spanning segment. Residues 282–319 (HCYMEYARLKGQSGSDVTLKDIGFQTDIRVYLHLRQTW) are Extracellular-facing. A helical membrane pass occupies residues 320 to 340 (LAFMIILCILEVIVILLLIFL). The Cytoplasmic portion of the chain corresponds to 341–368 (RKRIMIAIALIKEASRAVGFVMSSLVFP). A helical membrane pass occupies residues 369-389 (LFTFLLVCLCIAYWAITAVFL). The Extracellular segment spans residues 390 to 458 (STSNEAVYKV…FQIYNAFMFL (69 aa)). N-linked (GlcNAc...) asparagine glycans are attached at residues Asn-401, Asn-418, and Asn-421. A helical transmembrane segment spans residues 459–481 (WLANFVIALGQVTLAGAFASYYW). Residues 482–508 (AFKKPDDMPAFPIFSSLGRALRYHTGS) lie on the Cytoplasmic side of the membrane. Residues 509–529 (LAFGSLILAIVQMIRILLEYL) traverse the membrane as a helical segment. The Extracellular segment spans residues 530–567 (DHKLKGADNKCARFLLCCLKCCFWCLEKFIKFLNRNAY). Residues 568 to 588 (IMIAIYGTNFCTSARNAFFLL) form a helical membrane-spanning segment. The Cytoplasmic portion of the chain corresponds to 589-603 (MRNIIRVAVLDKVTD). A helical membrane pass occupies residues 604–624 (FLLFLGKLLVVGCVGILAFFF). The Extracellular portion of the chain corresponds to 625–642 (FSRRIQIVQDTAPTLNYY). Residues 643–663 (WVPILTVILGSYLIAHGFFSV) form a helical membrane-spanning segment. Residues 664–710 (YGMCVDTLFLCFLEDLERNDGSTERPYFMSGSLQKLLNKSNQTKPDK) lie on the Cytoplasmic side of the membrane.

The protein belongs to the CTL (choline transporter-like) family.

The protein resides in the cell membrane. Its subcellular location is the mitochondrion outer membrane. It catalyses the reaction choline(out) + n H(+)(in) = choline(in) + n H(+)(out). The catalysed reaction is ethanolamine(out) + n H(+)(in) = ethanolamine(in) + n H(+)(out). In terms of biological role, choline/H+ antiporter, mainly in mitochodria. Also acts as a low-affinity ethanolamine/H+ antiporter, regulating the supply of extracellular ethanolamine (Etn) for the CDP-Etn pathway, redistribute intracellular Etn and balance the CDP-Cho and CDP-Etn arms of the Kennedy pathway. This chain is Choline transporter-like protein 2 (slc44a2), found in Xenopus laevis (African clawed frog).